A 285-amino-acid chain; its full sequence is MKMAIPNKGRLKDPVVQFLASVGVKGNFSDDRALIIPTNWEGVQLVMVRTEDIPSIVESGAAELGITGHDYVIESNSDVDELIRLDFGKSKIVLAVPVSWNIDRVEEIKDEIRIATKYYNIAKQYLEKKNIKAKIVKISGAAEVMPSLGAADAIIDVMSTGTTLKLHGLKPLDTILESSAVVIANRNWVKSEEADKINLLLTMMKGALMARNKKMIFMNVPDDKLDKVIASLPAMLSPTLSKLAKSDAWEVITVVDEDLIPEVIAKVKANGARDIVVVNIEKVVK.

Belongs to the ATP phosphoribosyltransferase family. Long subfamily. Requires Mg(2+) as cofactor.

It is found in the cytoplasm. The enzyme catalyses 1-(5-phospho-beta-D-ribosyl)-ATP + diphosphate = 5-phospho-alpha-D-ribose 1-diphosphate + ATP. The protein operates within amino-acid biosynthesis; L-histidine biosynthesis; L-histidine from 5-phospho-alpha-D-ribose 1-diphosphate: step 1/9. With respect to regulation, feedback inhibited by histidine. Functionally, catalyzes the condensation of ATP and 5-phosphoribose 1-diphosphate to form N'-(5'-phosphoribosyl)-ATP (PR-ATP). Has a crucial role in the pathway because the rate of histidine biosynthesis seems to be controlled primarily by regulation of HisG enzymatic activity. In Sulfurisphaera tokodaii (strain DSM 16993 / JCM 10545 / NBRC 100140 / 7) (Sulfolobus tokodaii), this protein is ATP phosphoribosyltransferase.